Consider the following 362-residue polypeptide: Histidinol-phosphate aminotransferase (362 aa).

N6-(pyridoxal phosphate)lysine is present on Lys219.

The protein belongs to the class-II pyridoxal-phosphate-dependent aminotransferase family. Histidinol-phosphate aminotransferase subfamily. As to quaternary structure, homodimer. Pyridoxal 5'-phosphate is required as a cofactor.

It carries out the reaction L-histidinol phosphate + 2-oxoglutarate = 3-(imidazol-4-yl)-2-oxopropyl phosphate + L-glutamate. It functions in the pathway amino-acid biosynthesis; L-histidine biosynthesis; L-histidine from 5-phospho-alpha-D-ribose 1-diphosphate: step 7/9. In Maricaulis maris (strain MCS10) (Caulobacter maris), this protein is Histidinol-phosphate aminotransferase.